The chain runs to 520 residues: Sodium-dependent dicarboxylate transporter SdcS (520 aa).

14 helical membrane passes run 30-50 (AGQL…LLFF), 55-75 (LPWK…WWIT), 77-97 (AIPI…GHIL), 104-124 (SEYG…AIAM), 160-180 (SMFV…LAII), 207-227 (IGYA…PLII), 242-262 (FAKW…ITWL), 298-318 (KVVQ…EFLL), 323-343 (VTSS…LFII), 362-382 (ELPW…KGIS), 399-419 (GVSP…LTEV), 428-448 (MILP…LLLM), 452-472 (AMAA…AIIF), and 491-511 (LISA…VLGI).

It belongs to the SLC13A/DASS transporter (TC 2.A.47) family. NADC subfamily.

Its subcellular location is the cell membrane. Its function is as follows. Mediates the transport of the dicarboxylates fumarate, malate, and succinate across the cytoplasmic membrane via a Na(+)-electrochemical gradient. This is Sodium-dependent dicarboxylate transporter SdcS (sdcS) from Staphylococcus aureus (strain NCTC 8325 / PS 47).